Here is a 210-residue protein sequence, read N- to C-terminus: MKFLDQEKRRQLLNERHSCKMFDSHYEFSSTELEEIAEIARLSPSSYNTQPWHFVMVTDKDLKKQIAAHSYFNEEMIKSASALMVVCSLRPSELLPHGHYMQNLYPESYKVRVIPSFAQMLGVRFNHSMQRLESYILEQCYIAVGQICMGVSLMGLDSCIIGGFDPLKVGEVLEERINKPKIACLIALGKRVAEASQKSRKSKVDAITWL.

Residue 150 to 155 (GVSLMG) coordinates NADP(+).

Belongs to the nitroreductase family.

Functionally, reduction of a variety of nitroaromatic compounds using NADPH as source of reducing equivalents; two electrons are transferred. Capable of reducing metronidazole; inactive RdxA renders the bacterium resistant to this compound. The reduction of metronidazole generates hydroxylamine, a potent mutagen and bactericide. This chain is Oxygen-insensitive NADPH nitroreductase (rdxA), found in Helicobacter pylori (strain ATCC 700392 / 26695) (Campylobacter pylori).